We begin with the raw amino-acid sequence, 430 residues long: Trigger factor (430 aa).

A PPIase FKBP-type domain is found at 157-242; sequence GDLVALETWS…AVEVSEPVLP (86 aa).

It belongs to the FKBP-type PPIase family. Tig subfamily.

The protein localises to the cytoplasm. The catalysed reaction is [protein]-peptidylproline (omega=180) = [protein]-peptidylproline (omega=0). Functionally, involved in protein export. Acts as a chaperone by maintaining the newly synthesized protein in an open conformation. Functions as a peptidyl-prolyl cis-trans isomerase. The sequence is that of Trigger factor from Xanthomonas axonopodis pv. citri (strain 306).